Here is a 438-residue protein sequence, read N- to C-terminus: UDP-N-acetylmuramoylalanine--D-glutamate ligase (438 aa).

Residue 112 to 118 (GSNGKST) coordinates ATP.

This sequence belongs to the MurCDEF family.

The protein localises to the cytoplasm. The catalysed reaction is UDP-N-acetyl-alpha-D-muramoyl-L-alanine + D-glutamate + ATP = UDP-N-acetyl-alpha-D-muramoyl-L-alanyl-D-glutamate + ADP + phosphate + H(+). Its pathway is cell wall biogenesis; peptidoglycan biosynthesis. Its function is as follows. Cell wall formation. Catalyzes the addition of glutamate to the nucleotide precursor UDP-N-acetylmuramoyl-L-alanine (UMA). In Escherichia coli O6:H1 (strain CFT073 / ATCC 700928 / UPEC), this protein is UDP-N-acetylmuramoylalanine--D-glutamate ligase (murD).